Here is a 65-residue protein sequence, read N- to C-terminus: UPF0434 protein HSM_0997 (65 aa).

Belongs to the UPF0434 family.

This chain is UPF0434 protein HSM_0997, found in Histophilus somni (strain 2336) (Haemophilus somnus).